The following is a 359-amino-acid chain: Type-1 angiotensin II receptor (359 aa).

Over 1–25 (MILNSSTEDGIKRIQDDCPKAGRHN) the chain is Extracellular. Asn-4 carries an N-linked (GlcNAc...) (complex) asparagine glycan. 2 residues coordinate angiotensin II: Gln-15 and Asp-17. Cystine bridges form between Cys-18-Cys-274 and Cys-101-Cys-180. A helical transmembrane segment spans residues 26–55 (YIFVMIPTLYSIIFVVGIFGNSLVVIVIYF). At 56-61 (YMKLKT) the chain is on the cytoplasmic side. Residues 62-89 (VASVFLLNLALADLCFLLTLPLWAVYTA) form a helical membrane-spanning segment. The Extracellular segment spans residues 90–98 (MEYRWPFGN). The chain crosses the membrane as a helical span at residues 99–125 (YLCKIASASVSFNLYASVFLLTCLSID). Topologically, residues 126-141 (RYLAIVHPMKSRLRRT) are cytoplasmic. A helical transmembrane segment spans residues 142–165 (MLVAKVTCIIIWLLAGLASLPAII). The Extracellular portion of the chain corresponds to 166–190 (HRNVFFIENTNITVCAFHYESQNST). Residue Arg-167 coordinates angiotensin II. Asn-176 carries an N-linked (GlcNAc...) asparagine glycan. The angiotensin II site is built by Phe-182, His-183, and Tyr-184. An N-linked (GlcNAc...) asparagine glycan is attached at Asn-188. A helical membrane pass occupies residues 191-216 (LPIGLGLTKNILGFLFPFLIILTSYT). Lys-199 provides a ligand contact to angiotensin II. The Cytoplasmic portion of the chain corresponds to 217–239 (LIWKALKKAYEIQKNKPRNDDIF). The helical transmembrane segment at 240 to 268 (KIIMAIVLFFFFSWIPHQIFTFLDVLIQL) threads the bilayer. Residues 269–278 (GIIRDCRIAD) lie on the Extracellular side of the membrane. Residues 279-304 (IVDTAMPITICIAYFNNCLNPLFYGF) form a helical membrane-spanning segment. Topologically, residues 305–359 (LGKKFKRYFLQLLKYIPPKAKSHSNLSTKMSTLSYRPSDNVSSSTKKPAPCFEVE) are cytoplasmic. A compositionally biased stretch (polar residues) spans 335–350 (STLSYRPSDNVSSSTK). Positions 335–359 (STLSYRPSDNVSSSTKKPAPCFEVE) are disordered. A lipid anchor (S-palmitoyl cysteine) is attached at Cys-355.

Belongs to the G-protein coupled receptor 1 family. Interacts with MAS1. Interacts with ARRB1. Interacts with FLNA (via filamin repeat 21); increases PKA-mediated phosphorylation of FLNA. C-terminal Ser or Thr residues may be phosphorylated. As to expression, liver, lung, adrenal and adrenocortical adenomas.

Its subcellular location is the cell membrane. With respect to regulation, strongly inhibited by anti-hypertensive drugs losartan, candesartan, valsartan, irbesartan, telmisartan, eprosartan, olmesartan and azilsartan, most of which share a common biphenyl-tetrazole scaffold. Receptor for angiotensin II, a vasoconstricting peptide, which acts as a key regulator of blood pressure and sodium retention by the kidney. The activated receptor in turn couples to G-alpha proteins G(q) (GNAQ, GNA11, GNA14 or GNA15) and thus activates phospholipase C and increases the cytosolic Ca(2+) concentrations, which in turn triggers cellular responses such as stimulation of protein kinase C. Functionally, (Microbial infection) During SARS coronavirus-2/SARS-CoV-2 infection, it is able to recognize and internalize the complex formed by secreted ACE2 and SARS-CoV-2 spike protein through DNM2/dynamin 2-dependent endocytosis. The sequence is that of Type-1 angiotensin II receptor from Homo sapiens (Human).